A 463-amino-acid chain; its full sequence is tRNA (guanine(10)-N(2))-methyltransferase TRMT11 (463 aa).

Alanine 2 carries the post-translational modification N-acetylalanine.

It belongs to the class I-like SAM-binding methyltransferase superfamily. TRM11 methyltransferase family. In terms of assembly, part of the heterodimeric TRMT11-TRM112 methyltransferase complex; this complex forms an active tRNA methyltransferase, where TRMT112 acts as an activator of the catalytic subunit TRMT11.

It is found in the cytoplasm. It carries out the reaction guanosine(10) in tRNA + S-adenosyl-L-methionine = N(2)-methylguanosine(10) in tRNA + S-adenosyl-L-homocysteine + H(+). Catalytic subunit of the TRMT11-TRM112 methyltransferase complex, that specifically mediates the S-adenosyl-L-methionine-dependent N(2)-methylation of guanosine nucleotide at position 10 (m2G10) in tRNAs. This is one of the major tRNA (guanine-N(2))-methyltransferases. The chain is tRNA (guanine(10)-N(2))-methyltransferase TRMT11 from Homo sapiens (Human).